The primary structure comprises 223 residues: Ribonuclease 3 (223 aa).

In terms of domain architecture, RNase III spans 5-127 (LQRLEKKIGY…IIGAIYLDSD (123 aa)). Glu40 is a binding site for Mg(2+). The active site involves Asp44. Mg(2+) contacts are provided by Asp113 and Glu116. Residue Glu116 is part of the active site. The DRBM domain occupies 154-223 (DPKTRLQEYL…AADIALGQLN (70 aa)).

This sequence belongs to the ribonuclease III family. In terms of assembly, homodimer. Mg(2+) is required as a cofactor.

It is found in the cytoplasm. The catalysed reaction is Endonucleolytic cleavage to 5'-phosphomonoester.. Functionally, digests double-stranded RNA. Involved in the processing of primary rRNA transcript to yield the immediate precursors to the large and small rRNAs (23S and 16S). Processes some mRNAs, and tRNAs when they are encoded in the rRNA operon. Processes pre-crRNA and tracrRNA of type II CRISPR loci if present in the organism. In Aliivibrio fischeri (strain ATCC 700601 / ES114) (Vibrio fischeri), this protein is Ribonuclease 3.